The primary structure comprises 126 residues: Small ribosomal subunit protein eS6 (126 aa).

Belongs to the eukaryotic ribosomal protein eS6 family.

This Nanoarchaeum equitans (strain Kin4-M) protein is Small ribosomal subunit protein eS6.